Consider the following 338-residue polypeptide: Glycerol-3-phosphate dehydrogenase [NAD(P)+] (338 aa).

4 residues coordinate NADPH: serine 12, tryptophan 13, arginine 33, and lysine 110. Lysine 110, glycine 141, and serine 143 together coordinate sn-glycerol 3-phosphate. Alanine 145 provides a ligand contact to NADPH. Residues lysine 196, aspartate 249, serine 259, arginine 260, and asparagine 261 each contribute to the sn-glycerol 3-phosphate site. The Proton acceptor role is filled by lysine 196. NADPH is bound at residue arginine 260. Positions 284 and 286 each coordinate NADPH.

The protein belongs to the NAD-dependent glycerol-3-phosphate dehydrogenase family.

The protein resides in the cytoplasm. It carries out the reaction sn-glycerol 3-phosphate + NAD(+) = dihydroxyacetone phosphate + NADH + H(+). It catalyses the reaction sn-glycerol 3-phosphate + NADP(+) = dihydroxyacetone phosphate + NADPH + H(+). It functions in the pathway membrane lipid metabolism; glycerophospholipid metabolism. Catalyzes the reduction of the glycolytic intermediate dihydroxyacetone phosphate (DHAP) to sn-glycerol 3-phosphate (G3P), the key precursor for phospholipid synthesis. This Limosilactobacillus reuteri (strain DSM 20016) (Lactobacillus reuteri) protein is Glycerol-3-phosphate dehydrogenase [NAD(P)+].